A 121-amino-acid chain; its full sequence is Protein PilH (121 aa).

The Response regulatory domain occupies 3–119 (RILIVDDSPT…TLLKTINAVL (117 aa)). Asp-52 is modified (4-aspartylphosphate).

In terms of biological role, may be a part of a signal-transduction system that regulates twitching motility by controlling pilus function (extension and retraction). The sequence is that of Protein PilH (pilH) from Pseudomonas aeruginosa (strain ATCC 15692 / DSM 22644 / CIP 104116 / JCM 14847 / LMG 12228 / 1C / PRS 101 / PAO1).